A 109-amino-acid polypeptide reads, in one-letter code: Large ribosomal subunit protein bL31B (109 aa).

Residues 79–109 are disordered; that stretch reads NVRQPAQQPQPEEDALPAAKGKKKVVTKKKK. Basic residues predominate over residues 98–109; sequence KGKKKVVTKKKK.

This sequence belongs to the bacterial ribosomal protein bL31 family. Type B subfamily. As to quaternary structure, part of the 50S ribosomal subunit.

The sequence is that of Large ribosomal subunit protein bL31B from Chlamydia pneumoniae (Chlamydophila pneumoniae).